The sequence spans 252 residues: 5'-methylthioadenosine/S-adenosylhomocysteine nucleosidase (252 aa).

Glu-20 serves as the catalytic Proton acceptor. Residues Gly-86, Ile-160, and 181-182 (ME) contribute to the substrate site. Asp-205 acts as the Proton donor in catalysis.

It belongs to the PNP/UDP phosphorylase family. MtnN subfamily. As to quaternary structure, homodimer.

The enzyme catalyses S-adenosyl-L-homocysteine + H2O = S-(5-deoxy-D-ribos-5-yl)-L-homocysteine + adenine. The catalysed reaction is S-methyl-5'-thioadenosine + H2O = 5-(methylsulfanyl)-D-ribose + adenine. It carries out the reaction 5'-deoxyadenosine + H2O = 5-deoxy-D-ribose + adenine. Its pathway is amino-acid biosynthesis; L-methionine biosynthesis via salvage pathway; S-methyl-5-thio-alpha-D-ribose 1-phosphate from S-methyl-5'-thioadenosine (hydrolase route): step 1/2. Its function is as follows. Catalyzes the irreversible cleavage of the glycosidic bond in both 5'-methylthioadenosine (MTA) and S-adenosylhomocysteine (SAH/AdoHcy) to adenine and the corresponding thioribose, 5'-methylthioribose and S-ribosylhomocysteine, respectively. Also cleaves 5'-deoxyadenosine, a toxic by-product of radical S-adenosylmethionine (SAM) enzymes, into 5-deoxyribose and adenine. Thus, is required for in vivo function of the radical SAM enzymes biotin synthase and lipoic acid synthase, that are inhibited by 5'-deoxyadenosine accumulation. This chain is 5'-methylthioadenosine/S-adenosylhomocysteine nucleosidase, found in Buchnera aphidicola subsp. Baizongia pistaciae (strain Bp).